Reading from the N-terminus, the 317-residue chain is Large ribosomal subunit protein uL10 (317 aa).

Positions 286-317 (AGAGAAAEKKEEAKKEESESEEDDDMGFGLFD) are disordered. The span at 292-302 (AEKKEEAKKEE) shows a compositional bias: basic and acidic residues.

It belongs to the universal ribosomal protein uL10 family. As to quaternary structure, P0 forms a pentameric complex by interaction with dimers of P1 and P2. Post-translationally, phosphorylated.

Ribosomal protein P0 is the functional equivalent of E.coli protein L10. The protein is Large ribosomal subunit protein uL10 (RpLP0) of Ceratitis capitata (Mediterranean fruit fly).